The sequence spans 167 residues: MPILLKKQVSEVSCYAITVLGILCLILFTILVVVTCKWYYAFPYFSKVCPDEWIGYNSKCYYFTINETNWNDSKKLCDVMDSSLIRFDNIETLNFVSRYGKGSYWIDINQNRKIPGINFSLYYEQGVNDICLLFDTSNIIEMSCIFHERTICVKEDRYTHWYTEYMR.

Residues 49–152 enclose the C-type lectin domain; the sequence is CPDEWIGYNS…SCIFHERTIC (104 aa). 2 disulfides stabilise this stretch: Cys77–Cys152 and Cys131–Cys144.

The polypeptide is Putative C-type lectin protein FPV008/FPV253 (Vertebrata (FPV)).